Consider the following 218-residue polypeptide: Ribose-5-phosphate isomerase A (218 aa).

Substrate contacts are provided by residues Thr28 to Thr31, Asp81 to Asp84, and Lys94 to Gly97. The active-site Proton acceptor is the Glu103. Lys121 provides a ligand contact to substrate.

This sequence belongs to the ribose 5-phosphate isomerase family. Homodimer.

It carries out the reaction aldehydo-D-ribose 5-phosphate = D-ribulose 5-phosphate. It functions in the pathway carbohydrate degradation; pentose phosphate pathway; D-ribose 5-phosphate from D-ribulose 5-phosphate (non-oxidative stage): step 1/1. Functionally, catalyzes the reversible conversion of ribose-5-phosphate to ribulose 5-phosphate. This is Ribose-5-phosphate isomerase A from Sodalis glossinidius (strain morsitans).